The following is a 389-amino-acid chain: Phospho-N-acetylmuramoyl-pentapeptide-transferase (389 aa).

A run of 10 helical transmembrane segments spans residues 25–45 (RAVMATITALLIGLVCGPAVI), 73–93 (TMGGVLILLGIAVATLLWADL), 97–117 (FIWIVMLVTFGFGVIGWVDDY), 135–155 (FWQSVIGLFAAVYLAFSVSEA), 190–210 (ISYPLGVWGFIVLTYLVIVGA), 222–242 (GLVIMPVVLVGASLGVFAYVM), 259–279 (AGELLIFCSAMGGAGLAFLWF), 287–307 (FMGDVGALALGGALGTVAVIV), 311–331 (IVLFIMGGIFVAETLSVMLQV), and 366–386 (QVVVRFWIITLMLCLFGLSTL).

It belongs to the glycosyltransferase 4 family. MraY subfamily. Requires Mg(2+) as cofactor.

It is found in the cell inner membrane. The enzyme catalyses UDP-N-acetyl-alpha-D-muramoyl-L-alanyl-gamma-D-glutamyl-meso-2,6-diaminopimeloyl-D-alanyl-D-alanine + di-trans,octa-cis-undecaprenyl phosphate = di-trans,octa-cis-undecaprenyl diphospho-N-acetyl-alpha-D-muramoyl-L-alanyl-D-glutamyl-meso-2,6-diaminopimeloyl-D-alanyl-D-alanine + UMP. It functions in the pathway cell wall biogenesis; peptidoglycan biosynthesis. Catalyzes the initial step of the lipid cycle reactions in the biosynthesis of the cell wall peptidoglycan: transfers peptidoglycan precursor phospho-MurNAc-pentapeptide from UDP-MurNAc-pentapeptide onto the lipid carrier undecaprenyl phosphate, yielding undecaprenyl-pyrophosphoryl-MurNAc-pentapeptide, known as lipid I. This Paraburkholderia phytofirmans (strain DSM 17436 / LMG 22146 / PsJN) (Burkholderia phytofirmans) protein is Phospho-N-acetylmuramoyl-pentapeptide-transferase.